Consider the following 412-residue polypeptide: Subtilisin-like protease 6 (412 aa).

An N-terminal signal peptide occupies residues 1-20; sequence MGFITKAIPIVLAALSTVNG. The propeptide occupies 21–127; that stretch reads ARILEAGPHA…VRATTNGTNL (107 aa). One can recognise an Inhibitor I9 domain in the interval 36 to 120; that stretch reads KYIVVMKKDV…FIEPDFVVRA (85 aa). N-linked (GlcNAc...) asparagine glycosylation is found at N123 and N126. A Peptidase S8 domain is found at 135–412; the sequence is SWGLARVSTR…SKLIYNGSGK (278 aa). Catalysis depends on charge relay system residues D167 and H198. N-linked (GlcNAc...) asparagine glycans are attached at residues N252, N264, and N325. S358 acts as the Charge relay system in catalysis. N-linked (GlcNAc...) asparagine glycosylation occurs at N408.

The protein belongs to the peptidase S8 family.

The protein localises to the secreted. Its function is as follows. Secreted subtilisin-like serine protease with keratinolytic activity that contributes to pathogenicity. This is Subtilisin-like protease 6 (SUB6) from Trichophyton verrucosum (Cattle ringworm fungus).